We begin with the raw amino-acid sequence, 128 residues long: Small ribosomal subunit protein uS12 (128 aa).

A 3-methylthioaspartic acid modification is found at D89.

It belongs to the universal ribosomal protein uS12 family. As to quaternary structure, part of the 30S ribosomal subunit. Contacts proteins S8 and S17. May interact with IF1 in the 30S initiation complex.

In terms of biological role, with S4 and S5 plays an important role in translational accuracy. Interacts with and stabilizes bases of the 16S rRNA that are involved in tRNA selection in the A site and with the mRNA backbone. Located at the interface of the 30S and 50S subunits, it traverses the body of the 30S subunit contacting proteins on the other side and probably holding the rRNA structure together. The combined cluster of proteins S8, S12 and S17 appears to hold together the shoulder and platform of the 30S subunit. This chain is Small ribosomal subunit protein uS12, found in Campylobacter jejuni subsp. doylei (strain ATCC BAA-1458 / RM4099 / 269.97).